Consider the following 145-residue polypeptide: Methyl-coenzyme M reductase I operon protein D (145 aa).

MCR is composed of three subunits: alpha, beta, and gamma. The function of proteins C and D is not known.

The protein is Methyl-coenzyme M reductase I operon protein D (mcrD) of Methanothermobacter marburgensis (strain ATCC BAA-927 / DSM 2133 / JCM 14651 / NBRC 100331 / OCM 82 / Marburg) (Methanobacterium thermoautotrophicum).